We begin with the raw amino-acid sequence, 204 residues long: UPF0637 protein Lm4b_01081 (204 aa).

The protein belongs to the UPF0637 family.

The sequence is that of UPF0637 protein Lm4b_01081 from Listeria monocytogenes serotype 4b (strain CLIP80459).